The chain runs to 531 residues: O-phosphoserine--tRNA(Cys) ligase (531 aa).

Substrate is bound by residues 189-191 (HMT), 234-236 (SAS), 276-277 (YY), and asparagine 319.

It belongs to the class-II aminoacyl-tRNA synthetase family. O-phosphoseryl-tRNA(Cys) synthetase subfamily. In terms of assembly, homotetramer. Interacts with SepCysS.

It catalyses the reaction tRNA(Cys) + O-phospho-L-serine + ATP = O-phospho-L-seryl-tRNA(Cys) + AMP + diphosphate. Catalyzes the attachment of O-phosphoserine (Sep) to tRNA(Cys). The protein is O-phosphoserine--tRNA(Cys) ligase of Methanoculleus marisnigri (strain ATCC 35101 / DSM 1498 / JR1).